A 937-amino-acid chain; its full sequence is Isoleucine--tRNA ligase (937 aa).

The 'HIGH' region motif lies at 58-68 (PYANGTLHLGH). Position 561 (Glu561) interacts with L-isoleucyl-5'-AMP. The 'KMSKS' region signature appears at 602 to 606 (KMSKS). Lys605 contacts ATP. Residues Cys900, Cys903, Cys920, and Cys923 each contribute to the Zn(2+) site.

The protein belongs to the class-I aminoacyl-tRNA synthetase family. IleS type 1 subfamily. Monomer. The cofactor is Zn(2+).

Its subcellular location is the cytoplasm. The enzyme catalyses tRNA(Ile) + L-isoleucine + ATP = L-isoleucyl-tRNA(Ile) + AMP + diphosphate. Its function is as follows. Catalyzes the attachment of isoleucine to tRNA(Ile). As IleRS can inadvertently accommodate and process structurally similar amino acids such as valine, to avoid such errors it has two additional distinct tRNA(Ile)-dependent editing activities. One activity is designated as 'pretransfer' editing and involves the hydrolysis of activated Val-AMP. The other activity is designated 'posttransfer' editing and involves deacylation of mischarged Val-tRNA(Ile). In Histophilus somni (strain 2336) (Haemophilus somnus), this protein is Isoleucine--tRNA ligase.